The primary structure comprises 125 residues: Protein sigma-1-small (125 aa).

It belongs to the orthoreovirus sigma-1s protein family.

In Mammalia (T2J), this protein is Protein sigma-1-small (S1).